Consider the following 268-residue polypeptide: Acyl-CoA-binding domain-containing protein 4 (268 aa).

The region spanning 12–101 (CQKQFQAAVS…MKLVAQKVID (90 aa)) is the ACB domain. An acyl-CoA contacts are provided by residues 23-32 (IQNLPKNGSY), 43-47 (YSYYK), K69, and Y88. The disordered stretch occupies residues 151-175 (AVSEPPCLPKEPAPPSPESHSPRDL). Over residues 156–167 (PCLPKEPAPPSP) the composition is skewed to pro residues. 2 positions are modified to phosphoserine: S166 and S171.

In terms of biological role, binds medium- and long-chain acyl-CoA esters and may function as an intracellular carrier of acyl-CoA esters. The chain is Acyl-CoA-binding domain-containing protein 4 (ACBD4) from Homo sapiens (Human).